Reading from the N-terminus, the 1876-residue chain is MLRSGAASASSGGGRGPSSSLSSVKRSKHDDTRLPEAYQQERPPWRPPLHPTAARRHVPDLFPTKSGQPEDDMSQISVRKGFAPRTYVHNEYFCAHDAIHTRLLSPDALDTLSDWMDEVMQRRRELDRASIATNQYKPPSRVTLNDAKLANYVKDLADPTVPLMRLSRSVPHGFRGEKLFEMLWVGGALPSTATAATTTVNYFHSRIAGPPSASSASASASASASTSAPRKSVDIPRAVWFIRALGAAELSSLRNKSAATIIPEITSNLCAWMAKQVAELNLVHTAESNSTATASPAPVSPSTHLPRTPSAAPSSLSRSVAAAHFARTPSNLNPASSPSLAPAKEVCYVLQNDADEERWIAKWSYSLSLARHLHAQNLLDRSVLVRWIVDAFSASNLVQLPFLLELVQEVLLLVLRRRCFVKPFLTALLVQIPNVDARLDPSSSGGLRTKLVLLFRIVCENSPESLISPRLWFEHSASLTQLLNELNAETPLPLSHQAFEFVEQTVRPRVDRLLLRPHSGNTTQNASLETQETLSSPLQHHLDIQALDSFDMTTIDRVFLQNTSATHRYAKHDRDDTVWATRIDTILTWACTDRRSGVVRQYLAATLIEKIRFGVPWEESSEETDQVSLPAFDLEHNTTKTRKINVEPMLIKWLGDVETSLNQKLDESSTQTRVSLLATVDVGAIVVLLGELARRGVFSYTKYLQRLIARGMTAPSASSATEQHQNPDGSVQTPSSVSASRDSLHLRLLRSLPLYDQPASVYQQRRQAIYGDRTKETYEDAAQRRALRQLQSFLPFAFAQEVQAEASRIAVSPSPSTPDPVHALSRLWSASRFVRCRLFRSELLPAVTARVERLNGDQLSQISAVLVMADDFEGLAQLLATLLLRPLSDNLARAAFNMVIEYSLVWRSMDIMATLNQLVRQQLNHSSSIRNDRQAVMASTTLLRLRTLIENVPSRISASALDPGADHDALQQHVQALRPNVDALLDRFAKLTRSSVESDGSIASSSTPVEGSDMLTPFRSLFVQPDAMSDEMIERTIVDSVFARSDTSLVPSAVRLIDQLYLEASLEIDERHARWLSNLVLSIEQGTHSDASMKALLSLLTRLIAHGTLNLQLAMDTFLLPYLLSSVRRLTDPATRNTEVPMHIGSIVSSLGEIFASSLGETVPATSYEDMRAFGAQTKLLFAQVNLPSLLRAATCLISAFDETSTVPASEKAQIESFCNALLQSQPMQIAFRQEPRLCILAIKDTCKSMWGCNPSRVIDLAMACLDPTSLLLRDVGTIDAASVKNRLDGWDTAVVATELVEIFERLQLVESSFQTRADSKTKALASGIFDDLFVQLPDIGAQLVRDCQSSGLVSRFTDIGIKILSDKVKAASTDADKTPRRMDNSHKGMTNFGPDDGADAPAQAKTAADAAKHGPCVGEQQVESTLRSVVRMCEQQHSFIFNATDADSCAQLLLHVVTSLEDALGSMAAASHQDKVARLVTVLHGSMTFQLMHLVLRFGCLWNGTMRALALRLVKALLELTRQAGEKTECGGSFALLLDSLSFVLDELPPTLLSTCLPELETQLQTIELATQERSDKLQQLSFRLDNATTANAWLVASSAGAALKKGWFTSGGLNPWECAEYLEAPPAANPAAAGAAGAAGAAAGGNARAGVVETGRSGVNSRAAVESPGAVTVNDAETCNSLPGARTGWTGKLWLNTAIPLSMLGVRVTRDLVPNYASPASPGGVSVGSNDASSQPWTTGGGASAIGVGTCSAMDMDAKEALAALPMFVESERTYGERSAGEPAYSRDLRRGLLVEPNLPCRTRDERGETSQEPARATMDPAGAHTSVTSSATHDPSHVIDLTWDADEEMPLSTHPHHPAVATTSRKRRLSKRD.

The span at 1-10 (MLRSGAASAS) shows a compositional bias: low complexity. Disordered stretches follow at residues 1-75 (MLRS…DMSQ), 291-314 (TATA…AAPS), 715-737 (PSAS…PSSV), 1373-1405 (STDA…PAQA), and 1801-1876 (LPCR…SKRD). Residues 1373–1387 (STDADKTPRRMDNSH) show a composition bias toward basic and acidic residues. Over residues 1394–1405 (GPDDGADAPAQA) the composition is skewed to low complexity. Basic residues predominate over residues 1867-1876 (SRKRRLSKRD).

This sequence belongs to the Mediator complex subunit 12 family. Component of the SRB8-11 complex, which itself associates with the Mediator complex.

It is found in the nucleus. Component of the SRB8-11 complex. The SRB8-11 complex is a regulatory module of the Mediator complex which is itself involved in regulation of basal and activated RNA polymerase II-dependent transcription. The SRB8-11 complex may be involved in the transcriptional repression of a subset of genes regulated by Mediator. It may inhibit the association of the Mediator complex with RNA polymerase II to form the holoenzyme complex. The sequence is that of Mediator of RNA polymerase II transcription subunit 12 (SRB8) from Mycosarcoma maydis (Corn smut fungus).